Consider the following 200-residue polypeptide: Phospholipase A2 inhibitor LNF1 (200 aa).

The signal sequence occupies residues 1–19 (MKYLHTICLLFIFVARGNS). 8 cysteine pairs are disulfide-bonded: cysteine 22/cysteine 46, cysteine 25/cysteine 32, cysteine 39/cysteine 67, cysteine 73/cysteine 94, cysteine 95/cysteine 100, cysteine 118/cysteine 143, cysteine 136/cysteine 165, and cysteine 169/cysteine 191. Asparagine 176 carries an N-linked (GlcNAc...) asparagine glycan.

The protein belongs to the CNF-like-inhibitor family. In terms of assembly, occurs as a mixture of oligomers. Tetrameric arrangement appears to be the predominant quaternary structure. As to expression, expressed by the liver.

It localises to the secreted. In terms of biological role, inhibits the enzymatic activity of phospholipase A2 (PA2). The chain is Phospholipase A2 inhibitor LNF1 from Lachesis muta muta (Bushmaster).